We begin with the raw amino-acid sequence, 211 residues long: Troponin I, cardiac muscle (211 aa).

Ala1 carries the post-translational modification N-acetylalanine. Positions 1-43 are disordered; the sequence is ADESRDAAGEARPAPAPVRRRSSANYRAYATEPHAKSKKKISA. Ser4 bears the Phosphoserine mark. Position 22 is a phosphoserine; by PHK, PKA and PKD/PRKD1 (Ser22). Residue Ser23 is modified to Phosphoserine; by PKA and PKD/PRKD1. Tyr26 is subject to Phosphotyrosine. Thr31 is subject to Phosphothreonine; by STK4/MST1. The interval 32-79 is involved in binding TNC; that stretch reads EPHAKSKKKISASRKLQLKTLMLQIAKQELEREAEERRGEKGRALSTR. Ser42 and Ser44 each carry phosphoserine; by PKC/PRKCE. A Phosphothreonine; by STK4/MST1 modification is found at Thr51. Ser77 carries the post-translational modification Phosphoserine. The residue at position 78 (Thr78) is a Phosphothreonine. 2 positions are modified to phosphothreonine; by STK4/MST1: Thr129 and Thr143. The segment at 129-150 is involved in binding TNC and actin; that stretch reads TQKIFDLRGKFKRPTLRLRVRI. Position 151 is a phosphoserine; by PAK3 (Ser151). The residue at position 182 (Thr182) is a Phosphothreonine. Ser200 carries the post-translational modification Phosphoserine.

It belongs to the troponin I family. In terms of assembly, interacts with TRIM63. Binds to actin and tropomyosin. Interacts with STK4/MST1. In terms of processing, phosphorylated at Ser-22 and Ser-23 by PRKD1; phosphorylation reduces myofilament calcium sensitivity. Phosphorylated preferentially at Thr-31. Phosphorylation by STK4/MST1 alters its binding affinity to TNNC1 (cardiac Tn-C) and TNNT2 (cardiac Tn-T). Phosphorylated at Ser-42 and Ser-44 by PRKCE; phosphorylation increases myocardium contractile dysfunction. Ser-22 is one of three sites in the region of residues 1-48 that are phosphorylated by phosphorylase kinase.

In terms of biological role, troponin I is the inhibitory subunit of troponin, the thin filament regulatory complex which confers calcium-sensitivity to striated muscle actomyosin ATPase activity. This is Troponin I, cardiac muscle (TNNI3) from Oryctolagus cuniculus (Rabbit).